Reading from the N-terminus, the 262-residue chain is MNESTRNWPEELLELLGQTELTVNKIGYSGDHVYHVKEYRGTPAFLKIAPSVWWRTLRPEIEALAWLDGKLPVPKILYTAEHGGMDYLLMEALGGKDGSHETIQAKRKLFVKLYAEGLRSVHGLDIRECPLSNGLEKKLRDAKRIVDESLVDPADIKEEYDCTPEELYGLLLESKPVTEDLVFAHGDYCAPNLIIDGEKLSGFIDLGRAGVADRYQDISLAIRSLRHDYGDDRYKALFLELYGLDGLDEDKVRYYIRLDEFF.

Asp-187 functions as the Proton acceptor in the catalytic mechanism.

The protein belongs to the aminoglycoside phosphotransferase family. Monomer.

Its subcellular location is the cytoplasm. It catalyses the reaction kanamycin A + ATP = kanamycin 3'-phosphate + ADP + H(+). Its function is as follows. Resistance to butirosin and structurally-related aminoglycosides, including kanamycin and amikacin. The chain is Aminoglycoside 3'-phosphotransferase from Niallia circulans (Bacillus circulans).